Consider the following 219-residue polypeptide: uncharacterized protein (219 aa).

Residues 13–32 traverse the membrane as a helical segment; sequence VFGLFLFSLIFFGLLSLATF.

Its subcellular location is the membrane. This is an uncharacterized protein from Aquifex aeolicus (strain VF5).